We begin with the raw amino-acid sequence, 143 residues long: Nuclear transcription factor Y subunit B-4 (143 aa).

The segment at 1–23 (MSEGFDGTENGGGGGGGGVGKEQ) is disordered. The span at 9-20 (ENGGGGGGGGVG) shows a compositional bias: gly residues. A DNA-binding region spans residues 27–33 (LPIANIG). The subunit association domain (SAD) stretch occupies residues 54 to 65 (VQECVSEFISFI). The segment covering 117–130 (KGSRASELPVKKDV) has biased composition (basic and acidic residues). The interval 117–143 (KGSRASELPVKKDVVLNGDPGSSFEGM) is disordered.

The protein belongs to the NFYB/HAP3 subunit family. Heterotrimeric transcription factor composed of three components, NF-YA, NF-YB and NF-YC. NF-YB and NF-YC must interact and dimerize for NF-YA association and DNA binding. Ubiquitous.

The protein resides in the nucleus. In terms of biological role, component of the NF-Y/HAP transcription factor complex. The NF-Y complex stimulates the transcription of various genes by recognizing and binding to a CCAAT motif in promoters. May regulate the expression of photosynthetic genes, and may be involved in chloroplast and amyloplast development. This chain is Nuclear transcription factor Y subunit B-4 (NFYB4), found in Oryza sativa subsp. japonica (Rice).